Here is a 460-residue protein sequence, read N- to C-terminus: Bifunctional protein GlmU (460 aa).

The segment at 1-235 is pyrophosphorylase; it reads MALSAAIVLA…PLTVEGVNDR (235 aa). Residues 9 to 12, Lys-23, Gln-76, and 81 to 82 contribute to the UDP-N-acetyl-alpha-D-glucosamine site; these read LAAG and GT. Asp-109 contacts Mg(2+). Residues Gly-146, Glu-161, Asn-176, and Asn-233 each coordinate UDP-N-acetyl-alpha-D-glucosamine. Asn-233 contributes to the Mg(2+) binding site. The interval 236-256 is linker; that stretch reads VQLAALSKTYNRRVCERWMRD. The interval 257 to 460 is N-acetyltransferase; sequence GVTILDPETT…VEGWKPAWER (204 aa). Positions 338 and 356 each coordinate UDP-N-acetyl-alpha-D-glucosamine. The active-site Proton acceptor is His-368. Positions 371 and 382 each coordinate UDP-N-acetyl-alpha-D-glucosamine. Acetyl-CoA-binding positions include 391-392 and Ala-428; that span reads NY.

The protein in the N-terminal section; belongs to the N-acetylglucosamine-1-phosphate uridyltransferase family. This sequence in the C-terminal section; belongs to the transferase hexapeptide repeat family. In terms of assembly, homotrimer. The cofactor is Mg(2+).

The protein localises to the cytoplasm. The enzyme catalyses alpha-D-glucosamine 1-phosphate + acetyl-CoA = N-acetyl-alpha-D-glucosamine 1-phosphate + CoA + H(+). The catalysed reaction is N-acetyl-alpha-D-glucosamine 1-phosphate + UTP + H(+) = UDP-N-acetyl-alpha-D-glucosamine + diphosphate. Its pathway is nucleotide-sugar biosynthesis; UDP-N-acetyl-alpha-D-glucosamine biosynthesis; N-acetyl-alpha-D-glucosamine 1-phosphate from alpha-D-glucosamine 6-phosphate (route II): step 2/2. The protein operates within nucleotide-sugar biosynthesis; UDP-N-acetyl-alpha-D-glucosamine biosynthesis; UDP-N-acetyl-alpha-D-glucosamine from N-acetyl-alpha-D-glucosamine 1-phosphate: step 1/1. It participates in bacterial outer membrane biogenesis; LPS lipid A biosynthesis. Its function is as follows. Catalyzes the last two sequential reactions in the de novo biosynthetic pathway for UDP-N-acetylglucosamine (UDP-GlcNAc). The C-terminal domain catalyzes the transfer of acetyl group from acetyl coenzyme A to glucosamine-1-phosphate (GlcN-1-P) to produce N-acetylglucosamine-1-phosphate (GlcNAc-1-P), which is converted into UDP-GlcNAc by the transfer of uridine 5-monophosphate (from uridine 5-triphosphate), a reaction catalyzed by the N-terminal domain. In Bifidobacterium longum (strain DJO10A), this protein is Bifunctional protein GlmU.